Consider the following 315-residue polypeptide: MLKNKILTTTLSVSLLAPLANPLLENAKAANDTEDIGKGSDIEIIKRTEDKTSNKWGVTQNIQFDFVKDKKYNKDALILKMQGFISSRTTYYNYKKTNHVKAMRWPFQYNIGLKTNDKYVSLINYLPKNKIESTNVSQTLGYNIGGNFQSAPSLGGNGSFNYSKSISYTQQNYVSEVEQQNSKSVLWGVKANSFATESGQKSAFDSDLFVGYKPHSKDPRDYFVPDSELPPLVQSGFNPSFIATVSHEKGSSDTSEFEITYGRNMDVTHAIKRSTHYGNSYLDGHRVHNAFVNRNYTVKYEVNWKTHEIKVKGQN.

The signal sequence occupies residues 1 to 29 (MLKNKILTTTLSVSLLAPLANPLLENAKA).

This sequence belongs to the aerolysin family. As to quaternary structure, toxicity requires sequential binding and synergistic association of a class S and a class F component which form heterooligomeric complexes. HlgB (class F) associates with either hlgA thus forming an AB toxin or with hlgC thus forming a CB toxin.

Its subcellular location is the secreted. Its function is as follows. Toxin that seems to act by forming pores in the membrane of the cell. Has a hemolytic and a leucotoxic activity. The sequence is that of Gamma-hemolysin component C (hlgC) from Staphylococcus aureus (strain NCTC 8325 / PS 47).